Reading from the N-terminus, the 178-residue chain is Signaling threshold-regulating transmembrane adapter 1 (178 aa).

At M1–W23 the chain is on the extracellular side. N-linked (GlcNAc...) asparagine glycosylation occurs at N6. Residues G24–L44 traverse the membrane as a helical; Signal-anchor for type III membrane protein segment. Residues S45–S178 lie on the Cytoplasmic side of the membrane. Phosphoserine is present on residues S62 and S65. The residue at position 72 (Y72) is a Phosphotyrosine. The tract at residues Y72–L75 is interaction with GRB2. Residues G81 to G102 form a disordered region. 3 positions are modified to phosphoserine: S84, S87, and S89. Position 109 is a phosphotyrosine (Y109). T126 carries the phosphothreonine modification. An interaction with PTPN11 region spans residues I128–V133. Phosphotyrosine occurs at positions 130 and 151. The segment at Y151–V154 is interaction with CSK. A Phosphoserine modification is found at S164. Y170 bears the Phosphotyrosine mark. The tract at residues Y170–S173 is interaction with GRB2.

As to quaternary structure, homodimer; disulfide-linked. When phosphorylated, interacts with PTPN11/SHP2, GRB2 and CSK. Phosphorylated on tyrosines upon TCR activation; which promotes recruitment of PTPN11, GRB2 and CSK. As to expression, lymph node, spleen and thymus.

The protein localises to the cell membrane. Negatively regulates T-cell antigen receptor (TCR)-mediated signaling. Involved in positive selection of T-cells. This chain is Signaling threshold-regulating transmembrane adapter 1 (Sit1), found in Rattus norvegicus (Rat).